Consider the following 1456-residue polypeptide: Retrovirus-related Pol polyprotein from transposon RE2 (1456 aa).

The segment at 205-252 (NVVTHRNTNTNRNQNNRGDNRNYNNNNNRSNSWQPSSSGSRSDNRQPK) is disordered. The span at 210 to 245 (RNTNTNRNQNNRGDNRNYNNNNNRSNSWQPSSSGSR) shows a compositional bias: low complexity. The CCHC-type zinc-finger motif lies at 257 to 273 (RCQICSVQGHSAKRCPQ). Residues 276–291 (QFQSTTNQQQSTSPFT) are compositionally biased toward low complexity. A disordered region spans residues 276–295 (QFQSTTNQQQSTSPFTPWQP). Asp-313 (for protease activity) is an active-site residue. Residues 498–661 (TSSKPLEYIY…SPFQKLFGQP (164 aa)) enclose the Integrase catalytic domain. 2 residues coordinate Mg(2+): Asp-509 and Asp-571. The span at 738–754 (STSQEQRSDSAPNWPSH) shows a compositional bias: polar residues. Positions 738–896 (STSQEQRSDS…PPLPPVLPAP (159 aa)) are disordered. The segment covering 793–814 (SSSNLPSSSISSPSSSEPTAPS) has biased composition (low complexity). A compositionally biased stretch (polar residues) spans 816–827 (NGPQPTAQPHQT). Composition is skewed to low complexity over residues 828–841 (QNSNSNSPILNNPN) and 849–886 (SPNQNSPLPQSPISSPHIPTPSTSISEPNSPSSSSTST). The span at 887-896 (PPLPPVLPAP) shows a compositional bias: pro residues. The Reverse transcriptase Ty1/copia-type domain maps to 965–1208 (NHTWDLVPPP…LTAKPVATPM (244 aa)).

It catalyses the reaction DNA(n) + a 2'-deoxyribonucleoside 5'-triphosphate = DNA(n+1) + diphosphate. The polypeptide is Retrovirus-related Pol polyprotein from transposon RE2 (RE2) (Arabidopsis thaliana (Mouse-ear cress)).